Consider the following 197-residue polypeptide: Na(+)-translocating NADH-quinone reductase subunit E (197 aa).

6 consecutive transmembrane segments (helical) span residues 11–31 (SVFI…FLAV), 35–55 (VSTA…SVPV), 76–96 (FLKF…LEMF), 108–128 (LGIY…VSFM), 139–159 (VVYG…LAGI), and 175–195 (LGIT…FSGI).

It belongs to the NqrDE/RnfAE family. As to quaternary structure, composed of six subunits; NqrA, NqrB, NqrC, NqrD, NqrE and NqrF.

The protein localises to the cell inner membrane. The catalysed reaction is a ubiquinone + n Na(+)(in) + NADH + H(+) = a ubiquinol + n Na(+)(out) + NAD(+). NQR complex catalyzes the reduction of ubiquinone-1 to ubiquinol by two successive reactions, coupled with the transport of Na(+) ions from the cytoplasm to the periplasm. NqrA to NqrE are probably involved in the second step, the conversion of ubisemiquinone to ubiquinol. The sequence is that of Na(+)-translocating NADH-quinone reductase subunit E from Neisseria meningitidis serogroup B (strain ATCC BAA-335 / MC58).